Reading from the N-terminus, the 414-residue chain is Ribulose bisphosphate carboxylase/oxygenase activase (414 aa).

37–44 (GRKGEGKT) is an ATP binding site. Residues 296 to 326 (RGYQTAPPPEAPVIQPVNNSSHKQKTSNTHL) form a disordered region. Over residues 311 to 326 (PVNNSSHKQKTSNTHL) the composition is skewed to polar residues.

It belongs to the RuBisCO activase family.

Its function is as follows. Activation of RuBisCO (ribulose-1,5-bisohosphate carboxylase/oxygenase; EC 4.1.1.39) involves the ATP-dependent carboxylation of the epsilon-amino group of lysine leading to a carbamate structure. In Nostoc sp. (strain PCC 7120 / SAG 25.82 / UTEX 2576), this protein is Ribulose bisphosphate carboxylase/oxygenase activase (rca).